Consider the following 179-residue polypeptide: Large ribosomal subunit protein uL5 (179 aa).

It belongs to the universal ribosomal protein uL5 family. In terms of assembly, part of the 50S ribosomal subunit; part of the 5S rRNA/L5/L18/L25 subcomplex. Contacts the 5S rRNA and the P site tRNA. Forms a bridge to the 30S subunit in the 70S ribosome.

Functionally, this is one of the proteins that bind and probably mediate the attachment of the 5S RNA into the large ribosomal subunit, where it forms part of the central protuberance. In the 70S ribosome it contacts protein S13 of the 30S subunit (bridge B1b), connecting the 2 subunits; this bridge is implicated in subunit movement. Contacts the P site tRNA; the 5S rRNA and some of its associated proteins might help stabilize positioning of ribosome-bound tRNAs. This chain is Large ribosomal subunit protein uL5, found in Oceanobacillus iheyensis (strain DSM 14371 / CIP 107618 / JCM 11309 / KCTC 3954 / HTE831).